The sequence spans 519 residues: Ribonuclease Y (519 aa).

A helical membrane pass occupies residues 3 to 23 (PMTVLISILLTLLGLVVGYYV). Residues 209-272 (TVSVVNLPND…ETARIALDKL (64 aa)) form the KH domain. One can recognise an HD domain in the interval 335–428 (VLKHSMEVAF…VAAADALSAA (94 aa)).

This sequence belongs to the RNase Y family.

Its subcellular location is the cell membrane. In terms of biological role, endoribonuclease that initiates mRNA decay. The polypeptide is Ribonuclease Y (Bacillus velezensis (strain DSM 23117 / BGSC 10A6 / LMG 26770 / FZB42) (Bacillus amyloliquefaciens subsp. plantarum)).